Reading from the N-terminus, the 233-residue chain is MTKNPRNNKPKKILDSSYKSKTIWQNYIDALFETFPQLEISEVWAKWDGGNVTKDGGDAKLTANIRTGEHFLKAREAHIVDPNSDIYNTILYPKTGADLPCFGMDLMKFSDKKVIIVFDFQHPREKYLFSVDGLPEDDGKYRFFEMGNHFSKNIFVRYCKPDEVDQYLDTFKLYLTKYKEMIDNNKPVGEDTTVYSDFDTYMTELDPVRGYMKNKFGEGRSEAFVNDFLFSYK.

This sequence belongs to the HY2 family.

The catalysed reaction is (3Z)-phycoerythrobilin + 2 oxidized 2[4Fe-4S]-[ferredoxin] = biliverdin IXalpha + 2 reduced 2[4Fe-4S]-[ferredoxin] + 4 H(+). In terms of biological role, plays a role in phycoerythrobilin biosynthesis, the red pigment chromophore photosynthetically active biliproteins of the host cyanobacteria. Uses a four-electron reduction to carry out the reactions catalyzed by two enzymes (EC 1.3.7.2 and EC 1.3.7.3) in host. The sequence is that of Phycoerythrobilin synthase (pebS) from Prochlorococcus.